A 190-amino-acid polypeptide reads, in one-letter code: NADH-quinone oxidoreductase subunit B (190 aa).

[4Fe-4S] cluster contacts are provided by C69, C70, C134, and C164.

Belongs to the complex I 20 kDa subunit family. In terms of assembly, NDH-1 is composed of 14 different subunits. Subunits NuoB, C, D, E, F, and G constitute the peripheral sector of the complex. [4Fe-4S] cluster serves as cofactor.

The protein localises to the cell inner membrane. The enzyme catalyses a quinone + NADH + 5 H(+)(in) = a quinol + NAD(+) + 4 H(+)(out). NDH-1 shuttles electrons from NADH, via FMN and iron-sulfur (Fe-S) centers, to quinones in the respiratory chain. Couples the redox reaction to proton translocation (for every two electrons transferred, four hydrogen ions are translocated across the cytoplasmic membrane), and thus conserves the redox energy in a proton gradient. The chain is NADH-quinone oxidoreductase subunit B from Hyphomonas neptunium (strain ATCC 15444).